Reading from the N-terminus, the 180-residue chain is Epididymal-specific lipocalin-6 (180 aa).

An N-terminal signal peptide occupies residues 1-20; it reads MGGLLLAALLALVAVPRAQA. Cys81 and Cys174 are joined by a disulfide.

It belongs to the calycin superfamily. Lipocalin family.

It localises to the secreted. Its function is as follows. May play a role in male fertility. The polypeptide is Epididymal-specific lipocalin-6 (LCN6) (Macaca mulatta (Rhesus macaque)).